The chain runs to 221 residues: Urease accessory protein UreF (221 aa).

Belongs to the UreF family. In terms of assembly, ureD, UreF and UreG form a complex that acts as a GTP-hydrolysis-dependent molecular chaperone, activating the urease apoprotein by helping to assemble the nickel containing metallocenter of UreC. The UreE protein probably delivers the nickel.

The protein resides in the cytoplasm. Functionally, required for maturation of urease via the functional incorporation of the urease nickel metallocenter. This is Urease accessory protein UreF from Teredinibacter turnerae (strain ATCC 39867 / T7901).